Here is a 199-residue protein sequence, read N- to C-terminus: NAD(P)H dehydrogenase (quinone) (199 aa).

One can recognise a Flavodoxin-like domain in the interval Val-4–Ile-190. FMN-binding positions include Ser-10 to Ile-15 and Thr-78 to Phe-80. Tyr-12 provides a ligand contact to NAD(+). Trp-98 lines the substrate pocket. FMN contacts are provided by residues Ser-113–Gly-119 and His-134.

The protein belongs to the WrbA family. FMN serves as cofactor.

The catalysed reaction is a quinone + NADH + H(+) = a quinol + NAD(+). The enzyme catalyses a quinone + NADPH + H(+) = a quinol + NADP(+). This chain is NAD(P)H dehydrogenase (quinone), found in Afipia carboxidovorans (strain ATCC 49405 / DSM 1227 / KCTC 32145 / OM5) (Oligotropha carboxidovorans).